Here is a 289-residue protein sequence, read N- to C-terminus: ATP synthase gamma chain (289 aa).

It belongs to the ATPase gamma chain family. In terms of assembly, F-type ATPases have 2 components, CF(1) - the catalytic core - and CF(0) - the membrane proton channel. CF(1) has five subunits: alpha(3), beta(3), gamma(1), delta(1), epsilon(1). CF(0) has three main subunits: a, b and c.

It is found in the cell inner membrane. Functionally, produces ATP from ADP in the presence of a proton gradient across the membrane. The gamma chain is believed to be important in regulating ATPase activity and the flow of protons through the CF(0) complex. This Leptospira biflexa serovar Patoc (strain Patoc 1 / ATCC 23582 / Paris) protein is ATP synthase gamma chain.